The following is a 1254-amino-acid chain: NPC intracellular cholesterol transporter 1 homolog 1b (1254 aa).

A signal peptide spans 1-16 (MKVIFATIWLIAGAWS). At 17-272 (QSAEQLGCIW…WKIAGLYGVT (256 aa)) the chain is on the extracellular side. Disulfide bonds link cysteine 24-cysteine 81, cysteine 62-cysteine 116, cysteine 82-cysteine 120, cysteine 104-cysteine 241, cysteine 107-cysteine 161, cysteine 178-cysteine 186, cysteine 231-cysteine 246, and cysteine 243-cysteine 250. Residues asparagine 123 and asparagine 132 are each glycosylated (N-linked (GlcNAc...) asparagine). The chain crosses the membrane as a helical span at residues 273–293 (FILALIIACALSFFIFWGAFG). Over 294-325 (KTSAPSVCMPTLFGEFFYHGFRIWGTFCAKHP) the chain is Cytoplasmic. The helical transmembrane segment at 326 to 346 (VIVLALCSWAIAGLSFGIRYM) threads the bilayer. Topologically, residues 347–593 (TITTDPVELW…AIVELSEGEV (247 aa)) are extracellular. N-linked (GlcNAc...) asparagine glycosylation is present at asparagine 389. Cysteine 438 and cysteine 454 are joined by a disulfide. Asparagine 479 is a glycosylation site (N-linked (GlcNAc...) asparagine). Cysteine 491 and cysteine 500 are joined by a disulfide. Residues 592-757 (EVSTVVISYV…ITAFVALMAI (166 aa)) form the SSD domain. The helical transmembrane segment at 594–614 (STVVISYVVMFVYVAIALGHI) threads the bilayer. The Cytoplasmic segment spans residues 615–625 (RSCRGFLRESR). The helical transmembrane segment at 626 to 646 (IMLAIGGIVIVLASVVCSLGF) threads the bilayer. At 647-657 (WGYLDVTTTML) the chain is on the extracellular side. The helical transmembrane segment at 658 to 678 (AIEVIPFLVLAVGVDNIFIMV) threads the bilayer. The Cytoplasmic portion of the chain corresponds to 679–736 (HTYQRLDHSKFKTTHEAIGEAIGQVGPSILQTAGSEMACFAIGCISDMPAVKTFAMYA). Residues 737-757 (AIAILLDFLLQITAFVALMAI) form a helical membrane-spanning segment. Over 758–815 (DEKRYLDGRLDMLCCVKSGGKKINDEDGDGVDRPKEVGLLETLFKNFYSPFLLSKPVK) the chain is Extracellular. Residues 816-836 (VSVLLIFTVITCLSLMVTPSI) traverse the membrane as a helical segment. At 837 to 857 (EKGLDQEMSMPKNSHVVKYFR) the chain is on the cytoplasmic side. Residues 858-878 (YMVDLLAMGAPVYWVLKPGLN) traverse the membrane as a helical segment. Residues 879–1079 (YSEPLQQNLI…EQYLTIWGDA (201 aa)) are Extracellular-facing. Residues cysteine 889 and cysteine 894 are joined by a disulfide bond. N-linked (GlcNAc...) asparagine glycosylation is found at asparagine 896 and asparagine 939. 3 disulfide bridges follow: cysteine 935-cysteine 990, cysteine 936-cysteine 958, and cysteine 946-cysteine 955. The helical transmembrane segment at 1080–1100 (MFSLGMSLVAIFLVTLLITGL) threads the bilayer. The Cytoplasmic portion of the chain corresponds to 1101 to 1105 (DITST). A helical transmembrane segment spans residues 1106-1126 (FIVLFMVICILINMLGMMWAW). Topologically, residues 1127–1132 (SINLNA) are extracellular. A helical transmembrane segment spans residues 1133–1153 (ISLVNLVVCVGIGVEFVAHIV). Topologically, residues 1154-1174 (RSFKRAEGTAQERARHSLNVT) are cytoplasmic. A helical transmembrane segment spans residues 1175–1195 (GSSVLSGITLTKFAGIVVLGF). The Extracellular portion of the chain corresponds to 1196–1207 (SNSQIFQVFYFR). The chain crosses the membrane as a helical span at residues 1208–1228 (MYLGIVLIGAAHGLILLPVLL). Residues 1229-1254 (SLLGPPQKLARSSGAEPTASITITTN) lie on the Cytoplasmic side of the membrane.

This sequence belongs to the patched family. In terms of tissue distribution, expressed in the midgut.

It is found in the cell membrane. The catalysed reaction is cholesterol(in) = cholesterol(out). Important for cholesterol absorption at the midgut epithelium. Acts only in the early steps of sterol absorption, prior to Npc1a-dependent intracellular sterol trafficking. The protein is NPC intracellular cholesterol transporter 1 homolog 1b of Drosophila melanogaster (Fruit fly).